A 313-amino-acid polypeptide reads, in one-letter code: Secreted mono- and diacylglycerol lipase MDL5 (313 aa).

Positions 1–20 (MQLQYVLTLLWIIFAQNVFS) are cleaved as a signal peptide. Cys66 and Cys306 are joined by a disulfide. N-linked (GlcNAc...) asparagine glycosylation is found at Asn72 and Asn111. Ser180 functions as the Nucleophile in the catalytic mechanism. Asp238 is an active-site residue. Asn263 carries an N-linked (GlcNAc...) asparagine glycan. His290 is a catalytic residue.

This sequence belongs to the AB hydrolase superfamily. Lipase family. Class 3 subfamily.

The protein localises to the secreted. It localises to the cell wall. The enzyme catalyses a monoacylglycerol + H2O = glycerol + a fatty acid + H(+). The catalysed reaction is a diacylglycerol + H2O = a monoacylglycerol + a fatty acid + H(+). Its function is as follows. Secreted lipase involved in Dandruff and seborrheic dermatitis (D/SD) probably via lipase-mediated breakdown of sebaceous lipids and release of irritating free fatty acids. Shows activity against monoglyceride and diglyceride substrates, but not triglyceride substrates and does not exhibit regio-selective production of diacylglycerols. Cleaves oleic acid from 1,2 isomers of diolein on both the 1 and the 2 position of the glycerol backbone, resulting mainly in free fatty acids but no monoolein is detected. Shows activity on monoolein and liberates mostly free fatty acids, but can also perform the reverse reaction and produce diolein. In Malassezia globosa (strain ATCC MYA-4612 / CBS 7966) (Dandruff-associated fungus), this protein is Secreted mono- and diacylglycerol lipase MDL5.